The primary structure comprises 390 residues: Na(+)/H(+) antiporter NhaA 2 (390 aa).

The next 11 membrane-spanning stretches (helical) occupy residues 23-43 (IVLIACAALALLIANSPLAAA), 63-83 (LHLWINDGLMAVFFFVVGLEI), 100-120 (LPVLAAVAGMAVPALIYLAIT), 129-149 (GWAIPSATDIAFAIGVLALVG), 158-178 (LFLLTVAIVDDLGAVVVIALF), 181-201 (SGLKLAWLGASALILAALVLV), 208-228 (ALLPYLAGAVALWYTVLHSGI), 265-285 (GFVIVPLFGLANAGVALGADF), 293-313 (LGIAMGLLLGKQFGILGSILV), 331-351 (LWGIALLCGIGFTMSLFIAGL), and 362-382 (EAKLGILGGSLVSALAGLLVL).

This sequence belongs to the NhaA Na(+)/H(+) (TC 2.A.33) antiporter family.

Its subcellular location is the cell inner membrane. The enzyme catalyses Na(+)(in) + 2 H(+)(out) = Na(+)(out) + 2 H(+)(in). Functionally, na(+)/H(+) antiporter that extrudes sodium in exchange for external protons. This is Na(+)/H(+) antiporter NhaA 2 from Novosphingobium aromaticivorans (strain ATCC 700278 / DSM 12444 / CCUG 56034 / CIP 105152 / NBRC 16084 / F199).